The following is a 620-amino-acid chain: UvrABC system protein C (620 aa).

The region spanning 13–92 (DKPGVYIMKN…IKKYSPRYNI (80 aa)) is the GIY-YIG domain. In terms of domain architecture, UVR spans 204 to 239 (TSIIKKLKLEMEKAAEELEFEKAAKIRDRILAIELI).

It belongs to the UvrC family. As to quaternary structure, interacts with UvrB in an incision complex.

The protein resides in the cytoplasm. The UvrABC repair system catalyzes the recognition and processing of DNA lesions. UvrC both incises the 5' and 3' sides of the lesion. The N-terminal half is responsible for the 3' incision and the C-terminal half is responsible for the 5' incision. This chain is UvrABC system protein C, found in Clostridium perfringens (strain ATCC 13124 / DSM 756 / JCM 1290 / NCIMB 6125 / NCTC 8237 / Type A).